Here is a 212-residue protein sequence, read N- to C-terminus: Adenylate kinase (212 aa).

14–19 (GSGKGT) contacts ATP. An NMP region spans residues 34–63 (STGDLFRKKISEDSQFAAQIQNYLSSGSYV). AMP contacts are provided by residues T35, R40, 61–63 (SYV), 89–92 (GYPR), and Q96. The interval 126 to 163 (QRLFCQKCQKSYNLLLAKPKNELKCDLDSTDLITRNDD) is LID. ATP is bound at residue R127. Zn(2+) is bound by residues C130 and C133. 136 to 137 (SY) is an ATP binding site. 2 residues coordinate Zn(2+): C150 and D153. Positions 160 and 171 each coordinate AMP. Q199 is an ATP binding site.

It belongs to the adenylate kinase family. As to quaternary structure, monomer.

The protein resides in the cytoplasm. It carries out the reaction AMP + ATP = 2 ADP. Its pathway is purine metabolism; AMP biosynthesis via salvage pathway; AMP from ADP: step 1/1. In terms of biological role, catalyzes the reversible transfer of the terminal phosphate group between ATP and AMP. Plays an important role in cellular energy homeostasis and in adenine nucleotide metabolism. This Mesomycoplasma hyopneumoniae (strain J / ATCC 25934 / NCTC 10110) (Mycoplasma hyopneumoniae) protein is Adenylate kinase.